A 223-amino-acid polypeptide reads, in one-letter code: Adapter protein MecA (223 aa).

Belongs to the MecA family. In terms of assembly, homodimer.

Its function is as follows. Enables the recognition and targeting of unfolded and aggregated proteins to the ClpC protease or to other proteins involved in proteolysis. This Limosilactobacillus reuteri (strain DSM 20016) (Lactobacillus reuteri) protein is Adapter protein MecA.